The sequence spans 85 residues: U4-theraphotoxin-Hhn1a (85 aa).

A signal peptide spans 1–22 (MKVTLIAILTCAAVLVLHTTAE). Positions 23–48 (EELEAESQLMEVGMPDTELAAVDEER) are excised as a propeptide. Intrachain disulfides connect Cys52/Cys66, Cys56/Cys77, and Cys71/Cys82.

Belongs to the neurotoxin 12 (Hwtx-2) family. 02 (Hwtx-2) subfamily. In terms of assembly, monomer. As to expression, expressed by the venom gland.

The protein localises to the secreted. Its function is as follows. Neurotoxin active on both insects and mammals. This is U4-theraphotoxin-Hhn1a from Cyriopagopus hainanus (Chinese bird spider).